We begin with the raw amino-acid sequence, 273 residues long: Outer surface protein A (273 aa).

Residues 1-16 form the signal peptide; that stretch reads MKKYLLGIGLILALIA. Cysteine 17 carries N-palmitoyl cysteine lipidation. Cysteine 17 carries S-diacylglycerol cysteine lipidation.

The protein belongs to the OspA lipoprotein family.

Its subcellular location is the cell outer membrane. It localises to the cell surface. This is Outer surface protein A from Borreliella burgdorferi (strain N40) (Borrelia burgdorferi).